The sequence spans 333 residues: HTH-type transcriptional regulator pepR1 (333 aa).

One can recognise an HTH lacI-type domain in the interval 6 to 60 (VTIYDVAREAKVSMATVSRVVNGNNNVRKETRDRVMEVIKRLHYQPNAVAQGLAS). A DNA-binding region (H-T-H motif) is located at residues 8 to 27 (IYDVAREAKVSMATVSRVVN).

In terms of biological role, transcriptional regulator of the pepQ gene for prolidase. The chain is HTH-type transcriptional regulator pepR1 (pepR1) from Lactobacillus delbrueckii subsp. lactis.